The primary structure comprises 660 residues: MKVTLSALDTSESSFTPLVVIELAQDVKEETKEWLKNRIIAKKKDGGAQLLFRPLLNKYEQETLENQNLYLVGASKIRMLLGAEAVGLVKECNDNTMRAFTYRTRQNFKGFDDNNDDFLTMAECQFIIKHELENLRAKDEKMIPGYPQAKLYPGKSLLRRLLTSGIVIQVFPLHDSEALKKLEDTWYTRFALKYQPIDSIRGYFGETIALYFGFLEYFTFALIPMAVIGLPYYLFVWEDYDKYVIFASFNLIWSTVILELWKRGCANMTYRWGTLLMKRKFEEPRPGFHGVLGINSITGKEEPLYPSYKRQLRIYLVSLPFVCLCLYFSLYVMMIYFDMEVWALGLHENSGSEWTSVLLYVPSIIYAIVIEIMNRLYRYAAEFLTSWENHRLESAYQNHLILKVLVFNFLNCFASLFYIAFVLKDMKLLRQSLATLLITSQILNQIMESFLPYWLQRKHGVRVKRKVQALKADIDATLYEQVILEKEMGTYLGTFDDYLELFLQFGYVSLFSCVYPLAAAFAVLNNFTEVNSDALKMCRVFKRPFSEPSANIGVWQLAFETMSVISVVTNCALIGMSPQVNAVFPESKADLILIVVAVEHALLALKFILAFAIPDKPRHIQMKLARLEFESLEALKQQQMKLVTENLKEEPMESGKEKAT.

Over 1 to 207 (MKVTLSALDT…DSIRGYFGET (207 aa)) the chain is Cytoplasmic. A helical transmembrane segment spans residues 208–228 (IALYFGFLEYFTFALIPMAVI). At 229 to 240 (GLPYYLFVWEDY) the chain is on the extracellular side. A helical transmembrane segment spans residues 241-261 (DKYVIFASFNLIWSTVILELW). The Cytoplasmic segment spans residues 262–316 (KRGCANMTYRWGTLLMKRKFEEPRPGFHGVLGINSITGKEEPLYPSYKRQLRIYL). The chain crosses the membrane as a helical span at residues 317–337 (VSLPFVCLCLYFSLYVMMIYF). At 338 to 352 (DMEVWALGLHENSGS) the chain is on the extracellular side. A helical membrane pass occupies residues 353–373 (EWTSVLLYVPSIIYAIVIEIM). Residues 374 to 400 (NRLYRYAAEFLTSWENHRLESAYQNHL) are Cytoplasmic-facing. The chain crosses the membrane as a helical span at residues 401-421 (ILKVLVFNFLNCFASLFYIAF). Topologically, residues 422–500 (VLKDMKLLRQ…YLGTFDDYLE (79 aa)) are extracellular. Residues 501-521 (LFLQFGYVSLFSCVYPLAAAF) traverse the membrane as a helical segment. At 522–553 (AVLNNFTEVNSDALKMCRVFKRPFSEPSANIG) the chain is on the cytoplasmic side. The chain crosses the membrane as a helical span at residues 554–574 (VWQLAFETMSVISVVTNCALI). Over 575 to 590 (GMSPQVNAVFPESKAD) the chain is Extracellular. A helical transmembrane segment spans residues 591 to 611 (LILIVVAVEHALLALKFILAF). Residues 612–660 (AIPDKPRHIQMKLARLEFESLEALKQQQMKLVTENLKEEPMESGKEKAT) lie on the Cytoplasmic side of the membrane.

Belongs to the anoctamin family. Highly expressed in the brain. Intermediate levels in the retina and heart and low levels in the placenta, liver, lung, duodenum, kidney, testis and spleen. In brain areas, highest expression in the frontal and occipital cortices and in the cerebellum. Lower expression in the fetal brain than in the adult brain.

Its subcellular location is the cell membrane. Functionally, does not exhibit calcium-activated chloride channel (CaCC) activity. Can inhibit the activity of ANO1. The chain is Anoctamin-10 (ANO10) from Homo sapiens (Human).